The following is a 523-amino-acid chain: WD repeat-containing protein WDS homolog (523 aa).

The LisH domain occupies 16 to 48; it reads KKHEFIRILVQCLYSLGFKNSASCLEFESKILY. The region spanning 49–107 is the CTLH domain; sequence KTADSEFLEKQVLSGNWDSCVQVLDRIFDNSMDDTRNTALYLVFKQCLLEYLKRGDVSL. WD repeat units follow at residues 222 to 261, 267 to 306, 310 to 353, 355 to 394, 395 to 434, 438 to 480, and 483 to 523; these read AHKN…KVEL, SHQN…LRHT, NNTG…KAWR, TRIP…ERVI, SEEQ…KQPL, GHRQ…PLEV, and GHSM…KPLN.

In terms of assembly, interacts with RANBPM.

The protein resides in the cytoplasm. This Arabidopsis thaliana (Mouse-ear cress) protein is WD repeat-containing protein WDS homolog.